Reading from the N-terminus, the 100-residue chain is Small ribosomal subunit protein uS14c (100 aa).

Belongs to the universal ribosomal protein uS14 family. In terms of assembly, part of the 30S ribosomal subunit.

The protein resides in the plastid. Its subcellular location is the chloroplast. Its function is as follows. Binds 16S rRNA, required for the assembly of 30S particles. This is Small ribosomal subunit protein uS14c from Vitis vinifera (Grape).